The primary structure comprises 309 residues: Olfactory receptor 1A1 (309 aa).

At 1 to 25 (MRENNQSSTLEFILLGVTGQQEQED) the chain is on the extracellular side. Asn-5 carries N-linked (GlcNAc...) asparagine glycosylation. The helical transmembrane segment at 26–49 (FFYILFLFIYPITLIGNLLIVLAI) threads the bilayer. Residues 50–57 (CSDVHLHN) are Cytoplasmic-facing. Residues 58–79 (PMYFLLANLSLVDIFFSSVTIP) traverse the membrane as a helical segment. At 80–100 (KMLANHLLGSKSISFGGCLTQ) the chain is on the extracellular side. The cysteines at positions 97 and 189 are disulfide-linked. The helical transmembrane segment at 101–120 (MYFMIALGNTDSYILAAMAY) threads the bilayer. The Cytoplasmic portion of the chain corresponds to 121–139 (DRAVAISRPLHYTTIMSPR). The helical transmembrane segment at 140-158 (SCIWLIAGSWVIGNANALP) threads the bilayer. Residues 159-195 (HTLLTASLSFCGNQEVANFYCDITPLLKLSCSDIHFH) lie on the Extracellular side of the membrane. Residues 196–218 (VKMMYLGVGIFSVPLLCIIVSYI) traverse the membrane as a helical segment. The Cytoplasmic segment spans residues 219-235 (RVFSTVFQVPSTKGVLK). Residues 236 to 258 (AFSTCGSHLTVVSLYYGTVMGMY) form a helical membrane-spanning segment. The Extracellular segment spans residues 259-270 (FRPLTNYSLKDA). Asn-264 is a glycosylation site (N-linked (GlcNAc...) asparagine). A helical membrane pass occupies residues 271-290 (VITVMYTAVTPMLNPFIYSL). Topologically, residues 291–309 (RNRDVKAALRKLFNKRISS) are cytoplasmic.

It belongs to the G-protein coupled receptor 1 family.

It is found in the cell membrane. In terms of biological role, odorant receptor. The protein is Olfactory receptor 1A1 (OR1A1) of Pan troglodytes (Chimpanzee).